The following is a 205-amino-acid chain: Guanylate kinase (205 aa).

The Guanylate kinase-like domain maps to 5–183; it reads GLLIVFSGPS…AAERVKKIIE (179 aa). ATP is bound at residue 12–19; sequence GPSGVGKG.

This sequence belongs to the guanylate kinase family.

The protein resides in the cytoplasm. The catalysed reaction is GMP + ATP = GDP + ADP. Its function is as follows. Essential for recycling GMP and indirectly, cGMP. The protein is Guanylate kinase (gmk) of Lactococcus lactis subsp. lactis (strain IL1403) (Streptococcus lactis).